The chain runs to 198 residues: NADH-quinone oxidoreductase subunit C (198 aa).

The protein belongs to the complex I 30 kDa subunit family. In terms of assembly, NDH-1 is composed of 14 different subunits. Subunits NuoB, C, D, E, F, and G constitute the peripheral sector of the complex.

It is found in the cell inner membrane. The catalysed reaction is a quinone + NADH + 5 H(+)(in) = a quinol + NAD(+) + 4 H(+)(out). In terms of biological role, NDH-1 shuttles electrons from NADH, via FMN and iron-sulfur (Fe-S) centers, to quinones in the respiratory chain. The immediate electron acceptor for the enzyme in this species is believed to be ubiquinone. Couples the redox reaction to proton translocation (for every two electrons transferred, four hydrogen ions are translocated across the cytoplasmic membrane), and thus conserves the redox energy in a proton gradient. This is NADH-quinone oxidoreductase subunit C from Chromobacterium violaceum (strain ATCC 12472 / DSM 30191 / JCM 1249 / CCUG 213 / NBRC 12614 / NCIMB 9131 / NCTC 9757 / MK).